A 223-amino-acid polypeptide reads, in one-letter code: UPF0441 protein YgiB (223 aa).

Positions Thr-178–Thr-195 are enriched in low complexity. The disordered stretch occupies residues Thr-178–Gly-223. Positions Ala-204–Gly-223 are enriched in polar residues.

The protein belongs to the UPF0441 family.

This is UPF0441 protein YgiB from Escherichia coli (strain ATCC 8739 / DSM 1576 / NBRC 3972 / NCIMB 8545 / WDCM 00012 / Crooks).